The chain runs to 181 residues: Oligoribonuclease (181 aa).

The 164-residue stretch at 8 to 171 (LVWLDMEMTG…ADIYESIDEL (164 aa)) folds into the Exonuclease domain. The active site involves Tyr129.

This sequence belongs to the oligoribonuclease family.

Its subcellular location is the cytoplasm. Functionally, 3'-to-5' exoribonuclease specific for small oligoribonucleotides. This Bordetella bronchiseptica (strain ATCC BAA-588 / NCTC 13252 / RB50) (Alcaligenes bronchisepticus) protein is Oligoribonuclease.